Reading from the N-terminus, the 340-residue chain is Protein FAM50A-A (340 aa).

Disordered regions lie at residues Met-1–Glu-22 and Asn-123–Asn-178. Acidic residues predominate over residues Leu-124 to Pro-146. The span at Pro-169 to Asn-178 shows a compositional bias: basic and acidic residues.

It is found in the nucleus. In terms of biological role, probably involved in the regulation of pre-mRNA splicing. The protein is Protein FAM50A-A (fam50a-a) of Xenopus laevis (African clawed frog).